Consider the following 251-residue polypeptide: Capsid protein (251 aa).

Residues 1–35 (MPKRDAPWRHMAGTSKVSRSGNYSPSGGMGSKSNK) are disordered. The Bipartite nuclear localization signal signature appears at 3–20 (KRDAPWRHMAGTSKVSRS). The segment covering 15 to 35 (SKVSRSGNYSPSGGMGSKSNK) has biased composition (polar residues). The Nuclear localization signal signature appears at 35–49 (KANAWVNRPMYRKPR). A zinc finger spans residues 54–71 (YKSPDVPKGCEGPCKVQS). Residues 96–117 (ITHRVGKRFCVKSVYILGKIWM) carry the Nuclear export signal motif. A Bipartite nuclear localization signal motif is present at residues 195–242 (RRFWKVNNHVVYNHQEAGKYENHTENALLLYMACTHASNPVYATLKIR).

This sequence belongs to the geminiviridae capsid protein family. Homomultimer. Binds to single-stranded and double-stranded viral DNA. Interacts (via nuclear localization signals) with host importin alpha-1a.

Its subcellular location is the virion. It localises to the host nucleus. Encapsidates the viral DNA into characteristic twinned ('geminate') particles. Binds the genomic viral ssDNA and shuttles it into and out of the cell nucleus. The CP of bipartite geminiviruses is not required for cell-to-cell or systemic movement. The polypeptide is Capsid protein (Macroptilium lathyroides (Lima bean)).